A 249-amino-acid chain; its full sequence is Probable transcriptional regulatory protein ERGA_CDS_03720 (249 aa).

The interval 1–21 (MAGHSQFANIKHRKGAQDAKR) is disordered.

This sequence belongs to the TACO1 family.

Its subcellular location is the cytoplasm. In Ehrlichia ruminantium (strain Gardel), this protein is Probable transcriptional regulatory protein ERGA_CDS_03720.